The sequence spans 320 residues: Cytochrome f (320 aa).

Positions 1-35 are cleaved as a signal peptide; sequence MQNRNTFSWVKEPINRSISVLIIIYVITQTSISNA. Heme is bound by residues Tyr36, Cys56, Cys59, and His60. A helical membrane pass occupies residues 286 to 306; sequence VQGLLFFLASVTLAQIFLVLK.

It belongs to the cytochrome f family. The 4 large subunits of the cytochrome b6-f complex are cytochrome b6, subunit IV (17 kDa polypeptide, petD), cytochrome f and the Rieske protein, while the 4 small subunits are PetG, PetL, PetM and PetN. The complex functions as a dimer. Heme is required as a cofactor.

The protein localises to the plastid. The protein resides in the chloroplast thylakoid membrane. In terms of biological role, component of the cytochrome b6-f complex, which mediates electron transfer between photosystem II (PSII) and photosystem I (PSI), cyclic electron flow around PSI, and state transitions. This Piper cenocladum (Ant piper) protein is Cytochrome f.